Reading from the N-terminus, the 101-residue chain is Putative pterin-4-alpha-carbinolamine dehydratase (101 aa).

It belongs to the pterin-4-alpha-carbinolamine dehydratase family.

It carries out the reaction (4aS,6R)-4a-hydroxy-L-erythro-5,6,7,8-tetrahydrobiopterin = (6R)-L-erythro-6,7-dihydrobiopterin + H2O. The sequence is that of Putative pterin-4-alpha-carbinolamine dehydratase from Nitrobacter hamburgensis (strain DSM 10229 / NCIMB 13809 / X14).